A 240-amino-acid chain; its full sequence is Probable transcriptional regulatory protein HPG27_148 (240 aa).

It belongs to the TACO1 family.

Its subcellular location is the cytoplasm. The polypeptide is Probable transcriptional regulatory protein HPG27_148 (Helicobacter pylori (strain G27)).